A 258-amino-acid polypeptide reads, in one-letter code: tRNA pseudouridine synthase A (258 aa).

The Nucleophile role is filled by Asp55. Tyr113 serves as a coordination point for substrate.

The protein belongs to the tRNA pseudouridine synthase TruA family. As to quaternary structure, homodimer.

It carries out the reaction uridine(38/39/40) in tRNA = pseudouridine(38/39/40) in tRNA. In terms of biological role, formation of pseudouridine at positions 38, 39 and 40 in the anticodon stem and loop of transfer RNAs. The sequence is that of tRNA pseudouridine synthase A from Limosilactobacillus fermentum (strain NBRC 3956 / LMG 18251) (Lactobacillus fermentum).